A 297-amino-acid polypeptide reads, in one-letter code: PDZ domain-containing protein GIPC3 (297 aa).

The region spanning 97–177 (EVEVTKTEDA…SQPFTLRLVQ (81 aa)) is the PDZ domain.

It belongs to the GIPC family. Expressed in adult lung, brain and testis. In the inner ear, it is expressed in the inner and outer hair cells of the organ of Corti. Also expressed in cochlear spiral ganglion neurons.

In terms of biological role, required for postnatal maturation of the hair bundle and long-term survival of hair cells and spiral ganglion. The protein is PDZ domain-containing protein GIPC3 (Gipc3) of Mus musculus (Mouse).